Reading from the N-terminus, the 976-residue chain is Villin-2 (976 aa).

Gelsolin-like repeat units follow at residues 27–77 (FEAV…DEAG), 148–188 (IRLK…QERA), 260–302 (GKME…DERK), 399–450 (GKVK…EDQD), 531–571 (NKAV…EQLE), and 633–674 (FQVE…KEKQ). Residues 769-917 (NSSSNRPAYS…SEIQPSGATF (149 aa)) form a disordered region. Over residues 782 to 794 (RLNESHDGPRQRA) the composition is skewed to basic and acidic residues. Composition is skewed to low complexity over residues 795-812 (EALA…SSTK), 823-841 (SQAS…VLVA), and 848-858 (DTSPTRRSTSS). Serine 890 carries the post-translational modification Phosphoserine. Positions 908-917 (SEIQPSGATF) are enriched in polar residues. An HP domain is found at 911–976 (QPSGATFTYE…DLLKKKFDLF (66 aa)).

It belongs to the villin/gelsolin family. As to expression, expressed in all tissues examined. Mainly detected in the root epidermis and vasculature. Expressed in the root cap.

The protein resides in the cytoplasm. It localises to the cytoskeleton. Its function is as follows. Ca(2+)-regulated actin-binding protein. Involved in actin filaments bundling. Caps the barbed end of actin filaments and is able to sever them in a calcium-dependent manner. Required for the construction of actin collars in pollen tubes. Acts redundantly with VLN5 (AC Q9LVC6) to generate thick actin filament bundles and to regulate polarized pollen tube growth. Acts redundantly with VLN3 (AC O81645) to regulate directional organ growth and in sclerenchyma development. The polypeptide is Villin-2 (Arabidopsis thaliana (Mouse-ear cress)).